The chain runs to 77 residues: uncharacterized protein (77 aa).

2 consecutive 4Fe-4S ferredoxin-type domains span residues 3–32 and 36–65; these read VEII…WTKD and KYYA…IKVV. 8 residues coordinate [4Fe-4S] cluster: Cys-12, Cys-15, Cys-18, Cys-22, Cys-45, Cys-48, Cys-51, and Cys-55.

The cofactor is [4Fe-4S] cluster.

Its function is as follows. Ferredoxins are iron-sulfur proteins that transfer electrons probably in the CO-dehydrogenase complex. This is an uncharacterized protein from Methanocaldococcus jannaschii (strain ATCC 43067 / DSM 2661 / JAL-1 / JCM 10045 / NBRC 100440) (Methanococcus jannaschii).